The chain runs to 314 residues: Methionyl-tRNA formyltransferase (314 aa).

Ser-112 to Pro-115 provides a ligand contact to (6S)-5,6,7,8-tetrahydrofolate.

It belongs to the Fmt family.

The enzyme catalyses L-methionyl-tRNA(fMet) + (6R)-10-formyltetrahydrofolate = N-formyl-L-methionyl-tRNA(fMet) + (6S)-5,6,7,8-tetrahydrofolate + H(+). Functionally, attaches a formyl group to the free amino group of methionyl-tRNA(fMet). The formyl group appears to play a dual role in the initiator identity of N-formylmethionyl-tRNA by promoting its recognition by IF2 and preventing the misappropriation of this tRNA by the elongation apparatus. This chain is Methionyl-tRNA formyltransferase, found in Aeromonas salmonicida (strain A449).